The primary structure comprises 229 residues: V-type proton ATPase subunit E (229 aa).

This sequence belongs to the V-ATPase E subunit family. In terms of assembly, V-ATPase is a heteromultimeric enzyme composed of a peripheral catalytic V1 complex (components A to H) attached to an integral membrane V0 proton pore complex (components: a, c, c', c'' and d).

Functionally, subunit of the peripheral V1 complex of vacuolar ATPase essential for assembly or catalytic function. V-ATPase is responsible for acidifying a variety of intracellular compartments in eukaryotic cells. This is V-type proton ATPase subunit E (VATE) from Spinacia oleracea (Spinach).